The primary structure comprises 709 residues: MGKARRSPPGHHRHCEGCFNRHCHIPVEPNTSCLVISCHLLCGATFHMCKEAEHQLLCPLEQVPCLNSEYGCPLSMSRHKLAKHLQVCPASVVCCSMEWNRWPNVDSETTLHENIMKETPSEECLDTALALQDQKVLFRSLKMVELFPETREATEEEPTMNGETSVEEMGGAVGGVDIGLVPHGLSATNGEMAELSQEEREVLAKTKEGMDLVKFGQWENIFSKEHAASALTNSSASCESKNKNDSEKEQISSGHNMVEGEGAPKKKEPQENQKQQDVRTAMETTGLAPWQDGVLERLKTAVDAKDYNMYLVHNGRMLIHFGQMPACTPKERDFVYGKLEAQEVKTVYTFKVPVSYCGKRARLGDAMLSCKPSEHKAVDTSDLGITVEDLPKSDLIKTTLQCALERELKGHVISESRSIDGLFMDFATQTYNFEPEQFSSGTVLADLTAATPGGLHVELHSECVTRRHNKSSSAFTFTCNKFFRRDEFPLHFKNVHTDIQSCLNGWFQHRCPLAYLGCTFVQNHFRPPGQKAKVIYSQELKTFAIKPEVAPELSEGRKNNHLLGHGGKSQNSLTSLPLEILKYIAGFLDSVSLAQLSQVSVLMRNICATLLQERGMVLLQWKKKRYSHGGTSWRVHREIWQFSSLFSKIKSWEFNEVTSMSEHLKSCPFNIVEHKTDPILLTSMCQPREQARESLVSTFRIRPRGRYVS.

Residues 53-112 (EHQLLCPLEQVPCLNSEYGCPLSMSRHKLAKHLQVCPASVVCCSMEWNRWPNVDSETTLH) form a TRAF-type zinc finger. The segment at 232-280 (TNSSASCESKNKNDSEKEQISSGHNMVEGEGAPKKKEPQENQKQQDVRT) is disordered. Composition is skewed to basic and acidic residues over residues 240–250 (SKNKNDSEKEQ) and 262–277 (GAPK…KQQD). In terms of domain architecture, F-box spans 570 to 624 (QNSLTSLPLEILKYIAGFLDSVSLAQLSQVSVLMRNICATLLQERGMVLLQWKKK).

In terms of assembly, directly interacts with SKP1 and CUL1. In terms of tissue distribution, expressed only in heart and skeletal muscle.

Its subcellular location is the cytoplasm. Probable substrate-recognition component of the SCF (SKP1-CUL1-F-box protein)-type E3 ubiquitin ligase complex that may function in myogenesis. In Homo sapiens (Human), this protein is F-box only protein 40 (FBXO40).